Consider the following 443-residue polypeptide: ATP-dependent protease ATPase subunit HslU (443 aa).

ATP-binding positions include I18 and 60-65 (GVGKTE). The interval 141-165 (DQWGQNEENDTDSSTRQSFRKKLRE) is disordered. D256, E321, and R393 together coordinate ATP.

It belongs to the ClpX chaperone family. HslU subfamily. As to quaternary structure, a double ring-shaped homohexamer of HslV is capped on each side by a ring-shaped HslU homohexamer. The assembly of the HslU/HslV complex is dependent on binding of ATP.

Its subcellular location is the cytoplasm. In terms of biological role, ATPase subunit of a proteasome-like degradation complex; this subunit has chaperone activity. The binding of ATP and its subsequent hydrolysis by HslU are essential for unfolding of protein substrates subsequently hydrolyzed by HslV. HslU recognizes the N-terminal part of its protein substrates and unfolds these before they are guided to HslV for hydrolysis. This Photobacterium profundum (strain SS9) protein is ATP-dependent protease ATPase subunit HslU.